The chain runs to 82 residues: ATP synthase subunit c (82 aa).

A run of 2 helical transmembrane segments spans residues 5–25 (IASA…IGPG) and 57–77 (LAFM…LLFA).

This sequence belongs to the ATPase C chain family. As to quaternary structure, F-type ATPases have 2 components, F(1) - the catalytic core - and F(0) - the membrane proton channel. F(1) has five subunits: alpha(3), beta(3), gamma(1), delta(1), epsilon(1). F(0) has four main subunits: a(1), b(1), b'(1) and c(10-14). The alpha and beta chains form an alternating ring which encloses part of the gamma chain. F(1) is attached to F(0) by a central stalk formed by the gamma and epsilon chains, while a peripheral stalk is formed by the delta, b and b' chains.

It localises to the cellular thylakoid membrane. Its function is as follows. F(1)F(0) ATP synthase produces ATP from ADP in the presence of a proton or sodium gradient. F-type ATPases consist of two structural domains, F(1) containing the extramembraneous catalytic core and F(0) containing the membrane proton channel, linked together by a central stalk and a peripheral stalk. During catalysis, ATP synthesis in the catalytic domain of F(1) is coupled via a rotary mechanism of the central stalk subunits to proton translocation. Functionally, key component of the F(0) channel; it plays a direct role in translocation across the membrane. A homomeric c-ring of between 10-14 subunits forms the central stalk rotor element with the F(1) delta and epsilon subunits. In Cyanothece sp. (strain PCC 7425 / ATCC 29141), this protein is ATP synthase subunit c.